Consider the following 95-residue polypeptide: ESAT-6-like protein EsxC (95 aa).

The protein belongs to the WXG100 family. ESAT-6 subfamily.

The protein resides in the secreted. The protein is ESAT-6-like protein EsxC of Mycolicibacterium paratuberculosis (strain ATCC BAA-968 / K-10) (Mycobacterium paratuberculosis).